The chain runs to 609 residues: MPAAVDTAKTISKKRKRKHGGSAREATDNGVATSPAENGVEGKATETTTELTKDKDVELAKKVVKEEAQKKRKVSHSPSDEEESESEDEEKKEEDEKDNVKEDSGKANVPDLPSVDAVSLPQPDGGPKKFTELGLSEKTLQGIKEMGFETMTEIQQRTIPPLLAGRDVLGAAKTGSGKTLAFLIPAIEMLSALRFKPRNGTGVIVVSPTRELALQIFGVARELLTAHSQTYGIVIGGANRRAEAEKLTKGVNLLIATPGRLLDHLQNTPGFVFKNLKTLVIDEADRILEVGFEDEMRQIIKILPNEDRQTMLFSATQTTKVEDLARISLRPGPLYINVDHRKEHSTVEGLEQGYVICEADKRFLLLFSFLKRNLKKKIIVFFSSCNCVKYHAELLNYIDLPVLDLHGKQKQQKRTNTFFEFCNAKQGVLICTDVAARGLDIPAVDWIIQFDPPDDTRDYIHRVGRTARGANGRGRSLMFLQPSEVGFLKYLKEARVPVVEFDFPAKKIVNVQSQLEKLISQNYYLNKSAKDGYRSYLQAYASHSLRSVFDVHKLDLVKVAKSFGFSTPPRIDIQLGSSLSRDKKQQQQGRRSYGSQPKGLKFKRKHEDD.

Positions 1–131 are disordered; the sequence is MPAAVDTAKT…QPDGGPKKFT (131 aa). The segment covering 11-21 has biased composition (basic residues); it reads ISKKRKRKHGG. Over residues 51 to 69 the composition is skewed to basic and acidic residues; the sequence is LTKDKDVELAKKVVKEEAQ. Over residues 80–97 the composition is skewed to acidic residues; it reads DEEESESEDEEKKEEDEK. A Q motif motif is present at residues 128 to 156; sequence KKFTELGLSEKTLQGIKEMGFETMTEIQQ. One can recognise a Helicase ATP-binding domain in the interval 159–335; sequence IPPLLAGRDV…RISLRPGPLY (177 aa). Residue 172 to 179 coordinates ATP; that stretch reads AKTGSGKT. The DEAD box motif lies at 282–285; sequence DEAD. One can recognise a Helicase C-terminal domain in the interval 349-519; it reads GLEQGYVICE…NVQSQLEKLI (171 aa). Residues 361 to 377 carry the Bipartite nuclear localization signal motif; it reads KRFLLLFSFLKRNLKKK. The tract at residues 576 to 609 is disordered; the sequence is GSSLSRDKKQQQQGRRSYGSQPKGLKFKRKHEDD. A compositionally biased stretch (low complexity) spans 586 to 596; sequence QQQGRRSYGSQ. Basic residues predominate over residues 600–609; it reads LKFKRKHEDD.

Belongs to the DEAD box helicase family. DDX18/HAS1 subfamily. In terms of assembly, associates in the nucleolus with the 60S and pre-60S ribosomal subunits.

It is found in the nucleus. The protein localises to the nucleolus. It carries out the reaction ATP + H2O = ADP + phosphate + H(+). Its function is as follows. ATP-dependent RNA helicase involved in 40S ribosomal subunit biogenesis. Required for the processing and cleavage of 35S pre-rRNA at sites A0, A1, and A2, leading to mature 18S rRNA. The chain is ATP-dependent RNA helicase has1 (has1) from Emericella nidulans (strain FGSC A4 / ATCC 38163 / CBS 112.46 / NRRL 194 / M139) (Aspergillus nidulans).